Consider the following 275-residue polypeptide: Tumor necrosis factor-inducible gene 6 protein (275 aa).

The first 17 residues, 1–17 (MVVLLCLCVLLWEEAHG), serve as a signal peptide directing secretion. A Link domain is found at 36-129 (GVYHREARAG…SERWDAYCYN (94 aa)). 3 disulfide bridges follow: Cys58-Cys127, Cys82-Cys103, and Cys135-Cys161. An N-linked (GlcNAc...) asparagine glycan is attached at Asn118. Residues 135–247 (CGGVFTDPKR…GGFQIKYVTV (113 aa)) enclose the CUB domain. Glu183, Asp191, Asp232, Ser234, and Val235 together coordinate Ca(2+). A disulfide bond links Cys188 and Cys210. The span at 253–264 (SSQAKNTSTTGN) shows a compositional bias: polar residues. Residues 253 to 275 (SSQAKNTSTTGNKKFLPGRFSHL) are disordered. A glycan (N-linked (GlcNAc...) asparagine) is linked at Asn258.

In terms of assembly, interacts (via Link domain) with inter-alpha-inhibitor (I-alpha-I) component bikunin. Interacts with ITIH2/HC2; this interaction is required for transesterification of the HC to hyaluronan. Interacts (via Link and CUB domains) with ITIH1. Chondroitin sulfate may be required for the stability of the complex. Interacts (via Link domain) with various C-X-C and C-C chemokines including PF4, CXCL8, CXCL11, CXCL12, CCL2, CCL7, CCL19, CCL21, and CCL27; this interaction interferes with chemokine binding to glycosaminoglycans. Interacts (primarily via Link domain) with BMP2; this interaction is inhibited by hyaluronan. Interacts (via both Link and CUB domains) with TNFSF11. Interacts (via CUB domain) with FN1 (via type III repeats 9-14); this interaction enhances fibronectin fibril assembly. TNFAIP6 may act as a bridging molecule between FN1 and THBS1. Expressed in epiphyseal and metaphyseal bone marrow of both the femur and tibia (at protein level).

The protein localises to the secreted. In terms of biological role, major regulator of extracellular matrix organization during tissue remodeling. Catalyzes the transfer of a heavy chain (HC) from inter-alpha-inhibitor (I-alpha-I) complex to hyaluronan. Cleaves the ester bond between the C-terminus of the HC and GalNAc residue of the chondroitin sulfate chain in I-alpha-I complex followed by transesterification of the HC to hyaluronan. In the process, potentiates the antiprotease function of I-alpha-I complex through release of free bikunin. Acts as a catalyst in the formation of hyaluronan-HC oligomers and hyaluronan-rich matrix surrounding the cumulus cell-oocyte complex, a necessary step for oocyte fertilization. Assembles hyaluronan in pericellular matrices that serve as platforms for receptor clustering and signaling. Enables binding of hyaluronan deposited on the surface of macrophages to LYVE1 on lymphatic endothelium and facilitates macrophage extravasation. Alters hyaluronan binding to functionally latent CD44 on vascular endothelium, switching CD44 into an active state that supports leukocyte rolling. Modulates the interaction of chemokines with extracellular matrix components and proteoglycans on endothelial cell surface, likely preventing chemokine gradient formation. In a negative feedback mechanism, may limit excessive neutrophil recruitment at inflammatory sites by antagonizing the association of CXCL8 with glycosaminoglycans on vascular endothelium. Has a role in osteogenesis and bone remodeling. Inhibits BMP2-dependent differentiation of mesenchymal stem cell to osteoblasts. Protects against bone erosion during inflammation by inhibiting TNFSF11/RANKL-dependent osteoclast activation. This chain is Tumor necrosis factor-inducible gene 6 protein (Tnfaip6), found in Mus musculus (Mouse).